We begin with the raw amino-acid sequence, 253 residues long: Core protein VP8 (253 aa).

Positions 1–31 (MNDLLLENLFGEKALCAQVTRDQLLEIIAAG) are excised as a propeptide.

This sequence belongs to the chordopoxvirinae VP8 family. In terms of processing, undergoes morphogenesis-associated proteolysis which cleaves the 28 kDa to a 25-kDa product. Proteolytic cleavage of major core proteins P4a (A10L), P4b (A3L), and VP8 (L4R), which occurs at a late stage of core formation, is required for production of infectious mature virions (MV).

The protein localises to the virion. Its function is as follows. Major core structural protein. The protein is Core protein VP8 of Vertebrata (FPV).